We begin with the raw amino-acid sequence, 116 residues long: Putative pterin-4-alpha-carbinolamine dehydratase 1 (116 aa).

This sequence belongs to the pterin-4-alpha-carbinolamine dehydratase family.

The catalysed reaction is (4aS,6R)-4a-hydroxy-L-erythro-5,6,7,8-tetrahydrobiopterin = (6R)-L-erythro-6,7-dihydrobiopterin + H2O. This Gloeobacter violaceus (strain ATCC 29082 / PCC 7421) protein is Putative pterin-4-alpha-carbinolamine dehydratase 1.